The sequence spans 812 residues: Fibrous sheath CABYR-binding protein (812 aa).

Positions 1-66 are disordered; sequence MEESDEPEQP…SIGNIPGGKA (66 aa). A phosphoserine mark is found at serine 25, serine 57, serine 125, serine 133, serine 184, and serine 273. 4 disordered regions span residues 269–333, 367–388, 424–547, and 672–741; these read IQAP…PKGT, DSGRAESTTVEEATGEVQPPLS, FEDQ…PPSL, and PAEE…PSVK. Residues 275–286 are compositionally biased toward low complexity; sequence AKETSAAETTAK. Positions 488–501 are enriched in pro residues; sequence EVPPLPTEEWPLPP. Over residues 502–513 the composition is skewed to low complexity; that stretch reads VTEESPAEVTPP. Residues 514–528 show a composition bias toward acidic residues; the sequence is ETEEGPIEPAEEGPE.

Interacts with CABYR.

It is found in the cell projection. It localises to the cilium. The protein resides in the flagellum. Functionally, may be involved in the later stages of fibrous sheath biogenesis. Binds calcium. In Rattus norvegicus (Rat), this protein is Fibrous sheath CABYR-binding protein.